The primary structure comprises 737 residues: 1,4-alpha-glucan branching enzyme GlgB (737 aa).

Asp419 (nucleophile) is an active-site residue. Catalysis depends on Glu472, which acts as the Proton donor.

The protein belongs to the glycosyl hydrolase 13 family. GlgB subfamily. As to quaternary structure, monomer.

The enzyme catalyses Transfers a segment of a (1-&gt;4)-alpha-D-glucan chain to a primary hydroxy group in a similar glucan chain.. Its pathway is glycan biosynthesis; glycogen biosynthesis. Functionally, catalyzes the formation of the alpha-1,6-glucosidic linkages in glycogen by scission of a 1,4-alpha-linked oligosaccharide from growing alpha-1,4-glucan chains and the subsequent attachment of the oligosaccharide to the alpha-1,6 position. In Mesorhizobium japonicum (strain LMG 29417 / CECT 9101 / MAFF 303099) (Mesorhizobium loti (strain MAFF 303099)), this protein is 1,4-alpha-glucan branching enzyme GlgB.